Here is a 237-residue protein sequence, read N- to C-terminus: Uridylate kinase (237 aa).

Residue 12–15 (KLSG) participates in ATP binding. Residues 20–25 (GEDGLG) are involved in allosteric activation by GTP. UMP is bound at residue Gly54. ATP-binding residues include Gly55 and Arg59. Residues Asp74 and 135 to 142 (TGNPFFTT) contribute to the UMP site. 3 residues coordinate ATP: Thr162, Tyr168, and Asp171.

The protein belongs to the UMP kinase family. In terms of assembly, homohexamer.

It localises to the cytoplasm. The enzyme catalyses UMP + ATP = UDP + ADP. Its pathway is pyrimidine metabolism; CTP biosynthesis via de novo pathway; UDP from UMP (UMPK route): step 1/1. With respect to regulation, allosterically activated by GTP. Inhibited by UTP. Its function is as follows. Catalyzes the reversible phosphorylation of UMP to UDP. This chain is Uridylate kinase, found in Haemophilus influenzae (strain PittEE).